Reading from the N-terminus, the 458-residue chain is UDP-N-acetylmuramoylalanine--D-glutamate ligase (458 aa).

124-130 (GSDGKTT) lines the ATP pocket.

The protein belongs to the MurCDEF family.

The protein resides in the cytoplasm. It catalyses the reaction UDP-N-acetyl-alpha-D-muramoyl-L-alanine + D-glutamate + ATP = UDP-N-acetyl-alpha-D-muramoyl-L-alanyl-D-glutamate + ADP + phosphate + H(+). Its pathway is cell wall biogenesis; peptidoglycan biosynthesis. Functionally, cell wall formation. Catalyzes the addition of glutamate to the nucleotide precursor UDP-N-acetylmuramoyl-L-alanine (UMA). The chain is UDP-N-acetylmuramoylalanine--D-glutamate ligase from Clostridium botulinum (strain Okra / Type B1).